Consider the following 462-residue polypeptide: Lipase A (462 aa).

A signal peptide spans 1 to 21; it reads MRVSLRSITSLLAAATAAVLA. C122 and C294 are oxidised to a cystine. Active-site charge relay system residues include S205, D355, and H387. A disulfide bridge connects residues C371 and C415.

This sequence belongs to the AB hydrolase superfamily. Lipase family. As to quaternary structure, monomer.

Its subcellular location is the secreted. It carries out the reaction a triacylglycerol + H2O = a diacylglycerol + a fatty acid + H(+). Hydrolyzes triglycerides, with a preference for substrates with short-chain lengths (C4 to C8). Has the highest activity with tributyrin (C4), followed by tricaproin (C6) and tricaprylin (C8). Can also hydrolyze vinylacetate (C2) and triolein (C18), but with lower efficiency. Has no activity with tripalmitin (C16). The chain is Lipase A from Moesziomyces aphidis (Pseudozyma aphidis).